Consider the following 173-residue polypeptide: Transcription factor HES-2 (173 aa).

One can recognise a bHLH domain in the interval 13-70 (LRKSLKPLLEKRRRARINQSLSQLKGLILPLLGRENSNCSKLEKADVLEMTVRFLQEL). Residues 86 to 119 (YREGYSACVARLARVLPACRVLEPAVSARLLEHL) enclose the Orange domain. Residues 128-173 (LDGGRAGDSSGPSAPAPAPASAPEPASAPVPSPPSPPCGPGLWRPW) are disordered. The span at 141–166 (APAPAPASAPEPASAPVPSPPSPPCG) shows a compositional bias: pro residues. Positions 170-173 (WRPW) match the WRPW motif motif.

Transcription repression requires formation of a complex with a corepressor protein of the Groucho/TLE family. In terms of tissue distribution, expressed in placenta, pancreatic cancer, colon cancer with RER, cervical cancer, and in head and neck tumors.

It is found in the nucleus. Transcriptional repressor of genes that require a bHLH protein for their transcription. The chain is Transcription factor HES-2 (HES2) from Homo sapiens (Human).